Reading from the N-terminus, the 313-residue chain is Peptidyl-prolyl cis-trans isomerase 9 (313 aa).

A PPIase cyclophilin-type domain is found at 9 to 174 (FLDMALDEKP…AKVRIFNSGE (166 aa)). Basic and acidic residues-rich tracts occupy residues 216–230 (EERE…ESSR) and 253–269 (RGDR…KDDF). Disordered regions lie at residues 216 to 274 (EERE…IAVR) and 288 to 313 (TPEH…DLQP).

The protein belongs to the cyclophilin-type PPIase family.

The catalysed reaction is [protein]-peptidylproline (omega=180) = [protein]-peptidylproline (omega=0). In terms of biological role, PPIases accelerate the folding of proteins. It catalyzes the cis-trans isomerization of proline imid ic peptide bonds in oligopeptides. Thought to function as a catalyst in the folding and modification of cuticle collagens. This Caenorhabditis briggsae protein is Peptidyl-prolyl cis-trans isomerase 9.